The chain runs to 95 residues: Large ribosomal subunit protein uL23 (95 aa).

The protein belongs to the universal ribosomal protein uL23 family. In terms of assembly, part of the 50S ribosomal subunit. Contacts protein L29, and trigger factor when it is bound to the ribosome.

In terms of biological role, one of the early assembly proteins it binds 23S rRNA. One of the proteins that surrounds the polypeptide exit tunnel on the outside of the ribosome. Forms the main docking site for trigger factor binding to the ribosome. The protein is Large ribosomal subunit protein uL23 of Bacillus licheniformis (strain ATCC 14580 / DSM 13 / JCM 2505 / CCUG 7422 / NBRC 12200 / NCIMB 9375 / NCTC 10341 / NRRL NRS-1264 / Gibson 46).